The sequence spans 321 residues: MRIGQYQLRNRLIAAPMAGITDRPFRTLCYEMGAGLTVSEMMSSNPQVWESDKSRLRMVHIDEPGIRTVQIAGSDPKEMADAARINVESGAQIIDINMGCPAKKVNRKLAGSALLQYPDVVKSILTEVVNAVDVPVTLKIRTGWAPEHRNCEEIAQLAEDCGIQALTIHGRTRACLFNGEAEYDSIRAVKQKVSIPVIANGDITDPLKARAVLDYTGADALMIGRAAQGRPWIFREIQHYLDTGELLPPLPLAEVKRLLCAHVRELHDFYGPAKGYRIARKHVSWYLQEHAPNDQFRRTFNAIEDASEQLEALEAYFENFA.

FMN-binding positions include 16-18 and Q70; that span reads PMA. The Proton donor role is filled by C100. Residues K139, 200-202, and 224-225 contribute to the FMN site; these read NGD and GR.

Belongs to the Dus family. DusB subfamily. FMN serves as cofactor.

It carries out the reaction a 5,6-dihydrouridine in tRNA + NAD(+) = a uridine in tRNA + NADH + H(+). The enzyme catalyses a 5,6-dihydrouridine in tRNA + NADP(+) = a uridine in tRNA + NADPH + H(+). Catalyzes the synthesis of 5,6-dihydrouridine (D), a modified base found in the D-loop of most tRNAs, via the reduction of the C5-C6 double bond in target uridines. This Escherichia coli O157:H7 protein is tRNA-dihydrouridine synthase B.